A 620-amino-acid chain; its full sequence is Notoamide biosynthesis transcriptional activator notL' (620 aa).

Residues 1-26 (MPPSSKSRRLPPAASDSAASDAQKRR) form a disordered region. The segment at residues 33-59 (CSACKARKLKCTGAPPCANCVKSRIEC) is a DNA-binding region (zn(2)-C6 fungal-type). The interval 591 to 620 (ETGAFFLDPDQPSGNSTPIKSETPEGTAIS) is disordered.

It is found in the nucleus. Functionally, transcription factor that probably regulates the expression of the gene cluster that mediates the biosynthesis of notoamide, a fungal indole alkaloid that belongs to a family of natural products containing a characteristic bicyclo[2.2.2]diazaoctane core. The protein is Notoamide biosynthesis transcriptional activator notL' of Aspergillus versicolor.